Reading from the N-terminus, the 344-residue chain is DNA-directed RNA polymerase subunit alpha (344 aa).

Positions Met1–Glu246 are alpha N-terminal domain (alpha-NTD). Residues Glu259 to Glu344 are alpha C-terminal domain (alpha-CTD).

This sequence belongs to the RNA polymerase alpha chain family. Homodimer. The RNAP catalytic core consists of 2 alpha, 1 beta, 1 beta' and 1 omega subunit. When a sigma factor is associated with the core the holoenzyme is formed, which can initiate transcription.

The catalysed reaction is RNA(n) + a ribonucleoside 5'-triphosphate = RNA(n+1) + diphosphate. In terms of biological role, DNA-dependent RNA polymerase catalyzes the transcription of DNA into RNA using the four ribonucleoside triphosphates as substrates. The polypeptide is DNA-directed RNA polymerase subunit alpha (Borreliella burgdorferi (strain ATCC 35210 / DSM 4680 / CIP 102532 / B31) (Borrelia burgdorferi)).